A 348-amino-acid chain; its full sequence is Chloroacetanilide N-alkylformylase, oxygenase component (348 aa).

Residues 7–108 (WYAVAWCDEV…ARERHKLIWA (102 aa)) enclose the Rieske domain. [2Fe-2S] cluster is bound by residues Cys-47, His-49, Cys-66, and His-69. Residues His-159 and His-164 each contribute to the Fe cation site. His-250 provides a ligand contact to substrate. Asp-293 contacts Fe cation.

The chloroacetanilide N-alkylformylase multicomponent enzyme system is composed of an oxygenase component (CndA) and an electron transfer component formed by a ferredoxin reductase (CndC1) and a ferredoxin (CndB1). In vitro, chloroacetanilide N-alkylformylase assays in which CndB1 is substituted for CndB2 demonstrate that the two enzymes possess nearly identical activities. The cofactor is [2Fe-2S] cluster.

It carries out the reaction butachlor + 2 reduced [2Fe-2S]-[ferredoxin] + O2 + 2 H(+) = butyl formate + N-(2,6-diethylphenyl)-2-chloroacetamide + 2 oxidized [2Fe-2S]-[ferredoxin] + H2O. It catalyses the reaction alachlor + 2 reduced [2Fe-2S]-[ferredoxin] + O2 + 2 H(+) = methyl formate + N-(2,6-diethylphenyl)-2-chloroacetamide + 2 oxidized [2Fe-2S]-[ferredoxin] + H2O. The enzyme catalyses acetochlor + 2 reduced [2Fe-2S]-[ferredoxin] + O2 + 2 H(+) = N-(2-ethyl-6-methylphenyl)-2-chloroacetamide + ethyl formate + 2 oxidized [2Fe-2S]-[ferredoxin] + H2O. Its activity is regulated as follows. Activity enhanced by Fe(2+) and Mg(2+) ions. Divalent cations such as Ca(2+), Cr(2+), Co(2+), and Mn(2+) show moderate inhibition of the enzyme, whereas heavy metal ions such as Ag(+), Cu(2+), Pb(2+), Hg(2+), Ni(2+) and Zn(2+) severely inhibit the activity. Its function is as follows. Component of the chloroacetanilide N-alkylformylase multicomponent enzyme system involved in the degradation of chloroacetanilide herbicides (N-alkoxyalkyl-N-chloroacetyl-substituted aniline derivatives). In vitro, catalyzes the N-dealkylation of butachlor, alachlor and acetochlor to yield 2-chloro-N-(2,6-diethylphenyl)acetamide (CDEPA) (for alachlor and butachlor) and 2-chloro-N-(2-methyl-6-ethylphenyl)acetamide (CMEPA) (for acetochlor). The protein is Chloroacetanilide N-alkylformylase, oxygenase component of Rhizorhabdus wittichii (strain DC-6 / KACC 16600) (Sphingomonas wittichii).